A 378-amino-acid chain; its full sequence is Zinc finger protein DPF3 (378 aa).

Lys-99 participates in a covalent cross-link: Glycyl lysine isopeptide (Lys-Gly) (interchain with G-Cter in SUMO2). The interval 146–193 is disordered; that stretch reads LENDENVEEGNEEEDLEEDVPKRKNRTRGRARGSAGGRRRHDAASQED. Over residues 148–163 the composition is skewed to acidic residues; that stretch reads NDENVEEGNEEEDLEE. The span at 168 to 186 shows a compositional bias: basic residues; the sequence is RKNRTRGRARGSAGGRRRH. The C2H2-type zinc-finger motif lies at 198-221; it reads YVCDICGKRYKNRPGLSYHYAHTH. The tract at residues 225–254 is disordered; the sequence is EEGDEAQDQETRSPPNHRNENHRPQKGPDG. 2 PHD-type zinc fingers span residues 259 to 319 and 316 to 366; these read NNYC…CKSC and CKSC…CWEL. Residues 317–332 are interaction with HDGFL2; the sequence is KSCILCGTSENDDQLL. The residue at position 323 (Gly-323) is a Phosphoserine.

This sequence belongs to the requiem/DPF family. In terms of assembly, component of the BAF complex, which includes at least actin (ACTB), ARID1A, ARID1B/BAF250, SMARCA2, SMARCA4/BRG1/BAF190A, ACTL6A/BAF53, ACTL6B/BAF53B, SMARCE1/BAF57, SMARCC1/BAF155, SMARCC2/BAF170, SMARCB1/SNF5/INI1, and one or more of SMARCD1/BAF60A, SMARCD2/BAF60B, or SMARCD3/BAF60C. In muscle cells, the BAF complex also contains DPF3. Interacts with acetylated histones H3 and H4. Component of neuron-specific chromatin remodeling complex (nBAF complex) composed of at least, ARID1A/BAF250A or ARID1B/BAF250B, SMARCD1/BAF60A, SMARCD3/BAF60C, SMARCA2/BRM/BAF190B, SMARCA4/BRG1/BAF190A, SMARCB1/BAF47, SMARCC1/BAF155, SMARCE1/BAF57, SMARCC2/BAF170, DPF1/BAF45B, DPF3/BAF45C, ACTL6B/BAF53B and actin. As to quaternary structure, interacts with HDGFL2. Interacts with SMARCA4/BRG1/BAF190A, SMARCC1/BAF155 and SMARCD1/BAF60A. In terms of tissue distribution, expressed in the heart and somites. Expressed in cerebellum and spinal cord, but not in cerebral cortex. Expressed specifically in post-mitotic neurons (at protein level).

It localises to the nucleus. Its function is as follows. Muscle-specific component of the BAF complex, a multiprotein complex involved in transcriptional activation and repression of select genes by chromatin remodeling (alteration of DNA-nucleosome topology). Specifically binds acetylated lysines on histone 3 and 4 (H3K14ac, H3K9ac, H4K5ac, H4K8ac, H4K12ac, H4K16ac). In the complex, it acts as a tissue-specific anchor between histone acetylations and methylations and chromatin remodeling. It thereby probably plays an essential role in heart and skeletal muscle development. Belongs to the neuron-specific chromatin remodeling complex (nBAF complex). During neural development a switch from a stem/progenitor to a post-mitotic chromatin remodeling mechanism occurs as neurons exit the cell cycle and become committed to their adult state. The transition from proliferating neural stem/progenitor cells to post-mitotic neurons requires a switch in subunit composition of the npBAF and nBAF complexes. As neural progenitors exit mitosis and differentiate into neurons, npBAF complexes which contain ACTL6A/BAF53A and PHF10/BAF45A, are exchanged for homologous alternative ACTL6B/BAF53B and DPF1/BAF45B or DPF3/BAF45C subunits in neuron-specific complexes (nBAF). The npBAF complex is essential for the self-renewal/proliferative capacity of the multipotent neural stem cells. The nBAF complex along with CREST plays a role regulating the activity of genes essential for dendrite growth. In terms of biological role, acts as a regulator of myogenesis in cooperation with HDGFL2. Mediates the interaction of HDGFL2 with the BAF complex. HDGFL2-DPF3a activate myogenic genes by increasing chromatin accessibility through recruitment of SMARCA4/BRG1/BAF190A (ATPase subunit of the BAF complex) to myogenic gene promoters. This is Zinc finger protein DPF3 (Dpf3) from Mus musculus (Mouse).